The primary structure comprises 81 residues: Photosystem I iron-sulfur center (81 aa).

2 consecutive 4Fe-4S ferredoxin-type domains span residues 2-31 (SHSVKIYDTCIGCTQCVRACPTDVLEMVPW) and 39-68 (IASAPRTEDCVGCKRCESACPTDFLSVRVY). 8 residues coordinate [4Fe-4S] cluster: Cys11, Cys14, Cys17, Cys21, Cys48, Cys51, Cys54, and Cys58.

As to quaternary structure, the eukaryotic PSI reaction center is composed of at least 11 subunits. Requires [4Fe-4S] cluster as cofactor.

The protein resides in the plastid. The protein localises to the chloroplast thylakoid membrane. It catalyses the reaction reduced [plastocyanin] + hnu + oxidized [2Fe-2S]-[ferredoxin] = oxidized [plastocyanin] + reduced [2Fe-2S]-[ferredoxin]. Apoprotein for the two 4Fe-4S centers FA and FB of photosystem I (PSI); essential for photochemical activity. FB is the terminal electron acceptor of PSI, donating electrons to ferredoxin. The C-terminus interacts with PsaA/B/D and helps assemble the protein into the PSI complex. Required for binding of PsaD and PsaE to PSI. PSI is a plastocyanin/cytochrome c6-ferredoxin oxidoreductase, converting photonic excitation into a charge separation, which transfers an electron from the donor P700 chlorophyll pair to the spectroscopically characterized acceptors A0, A1, FX, FA and FB in turn. In Pleurastrum terricola (Filamentous green alga), this protein is Photosystem I iron-sulfur center.